A 347-amino-acid chain; its full sequence is Protein-glutamate methylesterase/protein-glutamine glutaminase (347 aa).

Residues 3–119 (EALVVDDSHF…STELSGHSEE (117 aa)) form the Response regulatory domain. The residue at position 53 (D53) is a 4-aspartylphosphate. A disordered region spans residues 132–154 (PTAGHDVEMEPASPPDATTSEYA). One can recognise a CheB-type methylesterase domain in the interval 152 to 346 (EYADNPTLLI…EAIADSIRRT (195 aa)). Active-site residues include S164, H191, and D288.

It belongs to the CheB family. Phosphorylated by CheA. Phosphorylation of the N-terminal regulatory domain activates the methylesterase activity.

Its subcellular location is the cytoplasm. It carries out the reaction [protein]-L-glutamate 5-O-methyl ester + H2O = L-glutamyl-[protein] + methanol + H(+). The enzyme catalyses L-glutaminyl-[protein] + H2O = L-glutamyl-[protein] + NH4(+). Functionally, involved in the modulation of the chemotaxis system; catalyzes the demethylation of specific methylglutamate residues introduced into the Htr transducer proteins (methyl-accepting chemotaxis proteins) by CheR. Also required for Htr deamidations, at least at a specific glutamine-glutamate pair in HTR-II and a specific aspartate-glutamine pair in Htr4. In Halobacterium salinarum (strain ATCC 29341 / DSM 671 / R1), this protein is Protein-glutamate methylesterase/protein-glutamine glutaminase.